The primary structure comprises 427 residues: MSNNQTLFERAQRTIPGGVNSPVRAFRSVGGTPRFVARAQGAYFWDADGKRYIDYIGSWGPMIVGHVHPDVLAAVQRVLADGFSFGAPTEAEIEIAEEICKLVPSIEQVRMVSSGTEATMSALRLARGFTGRSRIVKFEGCYHGHADSLLVKAGSGLLTFGNPTSAGVPADVAKHTTVLEYNNVAALEEAFAAFGDEIAAVIVEPVAGNMNLVRGTPEFLNALRALCTKHGAVLIFDEVMCGFRVALGGAQQHYGIKPDLTCLGKVIGGGMPAAAFGGRGDIMSHLAPLGGVYQAGTLSGNPVAVAAGLATLRLIQAPGFHDALADKTRRLADGLAAEARAAGVPFSADAIGGMFGLYFTEQVPASFADVTKSDIERFNRFFHLMLDAGVYFAPSAYEAGFVSSAHDDATLDATLDAARRAFAALRA.

Lysine 265 is modified (N6-(pyridoxal phosphate)lysine).

Belongs to the class-III pyridoxal-phosphate-dependent aminotransferase family. HemL subfamily. Homodimer. Pyridoxal 5'-phosphate is required as a cofactor.

It is found in the cytoplasm. The enzyme catalyses (S)-4-amino-5-oxopentanoate = 5-aminolevulinate. Its pathway is porphyrin-containing compound metabolism; protoporphyrin-IX biosynthesis; 5-aminolevulinate from L-glutamyl-tRNA(Glu): step 2/2. The chain is Glutamate-1-semialdehyde 2,1-aminomutase from Burkholderia thailandensis (strain ATCC 700388 / DSM 13276 / CCUG 48851 / CIP 106301 / E264).